A 337-amino-acid chain; its full sequence is MATMARSFLQAISKDEAVAPPLRVVQIEGLAVLKIIKHCKEFSPTLVTGQLLGLDVGSVLEVTNCFPFPVRDDDEEIEADGANYQLEMMRCLREVNVDNNTVGWYQSTVLGSYQTVELIETFMNYQENIKRCVCIIYDPSKADLGVLALKALKLSDSFMELYRGGNFTGEKLREKNFSWMDIFEEIPIKVSNSALVSAFMTELETDTPVSQGDYDRLHSSTTPFLENNMEFLIKCMDDLSMEQQKFQYYYRNLSRQQAQQQAWLQKRRTENMARKSAGEEPLPEEDPSNPIFKAIPEPSRLESFLITNQVSNFCGQINGVAGQNFSRLYLTKALHDN.

Residues 25 to 158 enclose the MPN domain; it reads VQIEGLAVLK…LKALKLSDSF (134 aa). Ser-178 is modified (phosphoserine; by ATPK1). The span at 267-278 shows a compositional bias: basic and acidic residues; sequence RRTENMARKSAG. A disordered region spans residues 267 to 290; the sequence is RRTENMARKSAGEEPLPEEDPSNP.

Belongs to the eIF-3 subunit H family. As to quaternary structure, component of the eukaryotic translation initiation factor 3 (eIF-3) complex. Interacts directly with TIF3A1, TIF3B1, TIF3C1, TIF3E1 and TIF3F1. Associates with the CSN (COP9 signalosome) complex. Binds to CSN1, CSN7 and CSN8. Interacts with ATPK1. In terms of processing, in response to auxin (NAA), phosphorylated at Ser-178 by ATPK1 and binds to polysomes via TOR signaling. This phosphorylation is repressed by Torin-1. In terms of tissue distribution, mostly expressed in roots and flowers, and, to a lower extent, in leaves, stems and siliques.

It localises to the cytoplasm. In terms of biological role, component of the eukaryotic translation initiation factor 3 (eIF-3) complex, which is involved in protein synthesis of a specialized repertoire of mRNAs and, together with other initiation factors, stimulates binding of mRNA and methionyl-tRNAi to the 40S ribosome. The eIF-3 complex specifically targets and initiates translation of a subset of mRNAs involved in cell proliferation (Potential). Regulates translation initiation of specific 5' mRNAs harboring multiple upstream open reading frames (uORFs) in their 5' leader sequence (e.g. BETA-OHASE 2 and LHY). This Arabidopsis thaliana (Mouse-ear cress) protein is Eukaryotic translation initiation factor 3 subunit H (TIF3H1).